The chain runs to 369 residues: 4-hydroxy-3-methylbut-2-en-1-yl diphosphate synthase (flavodoxin) (369 aa).

[4Fe-4S] cluster is bound by residues cysteine 270, cysteine 273, cysteine 305, and glutamate 312.

It belongs to the IspG family. It depends on [4Fe-4S] cluster as a cofactor.

The catalysed reaction is (2E)-4-hydroxy-3-methylbut-2-enyl diphosphate + oxidized [flavodoxin] + H2O + 2 H(+) = 2-C-methyl-D-erythritol 2,4-cyclic diphosphate + reduced [flavodoxin]. It participates in isoprenoid biosynthesis; isopentenyl diphosphate biosynthesis via DXP pathway; isopentenyl diphosphate from 1-deoxy-D-xylulose 5-phosphate: step 5/6. Converts 2C-methyl-D-erythritol 2,4-cyclodiphosphate (ME-2,4cPP) into 1-hydroxy-2-methyl-2-(E)-butenyl 4-diphosphate. In Pseudomonas savastanoi pv. phaseolicola (strain 1448A / Race 6) (Pseudomonas syringae pv. phaseolicola (strain 1448A / Race 6)), this protein is 4-hydroxy-3-methylbut-2-en-1-yl diphosphate synthase (flavodoxin).